The primary structure comprises 814 residues: Valine--tRNA ligase (814 aa).

Positions 46-56 (PTVSGQLHIGH) match the 'HIGH' region motif. Positions 536–540 (KMSKS) match the 'KMSKS' region motif. An ATP-binding site is contributed by lysine 539.

The protein belongs to the class-I aminoacyl-tRNA synthetase family. ValS type 2 subfamily. Monomer.

It is found in the cytoplasm. The catalysed reaction is tRNA(Val) + L-valine + ATP = L-valyl-tRNA(Val) + AMP + diphosphate. Functionally, catalyzes the attachment of valine to tRNA(Val). As ValRS can inadvertently accommodate and process structurally similar amino acids such as threonine, to avoid such errors, it has a 'posttransfer' editing activity that hydrolyzes mischarged Thr-tRNA(Val) in a tRNA-dependent manner. This Rickettsia prowazekii (strain Madrid E) protein is Valine--tRNA ligase.